We begin with the raw amino-acid sequence, 357 residues long: DNA primase small subunit PriS (357 aa).

Residues Asp105, Asp107, and Asp259 contribute to the active site.

Belongs to the eukaryotic-type primase small subunit family. As to quaternary structure, heterodimer of a small subunit (PriS) and a large subunit (PriL). The cofactor is Mg(2+). Requires Mn(2+) as cofactor.

Its function is as follows. Catalytic subunit of DNA primase, an RNA polymerase that catalyzes the synthesis of short RNA molecules used as primers for DNA polymerase during DNA replication. The small subunit contains the primase catalytic core and has DNA synthesis activity on its own. Binding to the large subunit stabilizes and modulates the activity, increasing the rate of DNA synthesis while decreasing the length of the DNA fragments, and conferring RNA synthesis capability. The DNA polymerase activity may enable DNA primase to also catalyze primer extension after primer synthesis. May also play a role in DNA repair. In Methanococcus maripaludis (strain C5 / ATCC BAA-1333), this protein is DNA primase small subunit PriS.